The chain runs to 89 residues: Co-chaperonin GroES (89 aa).

This sequence belongs to the GroES chaperonin family. As to quaternary structure, heptamer of 7 subunits arranged in a ring. Interacts with the chaperonin GroEL.

The protein localises to the cytoplasm. In terms of biological role, together with the chaperonin GroEL, plays an essential role in assisting protein folding. The GroEL-GroES system forms a nano-cage that allows encapsulation of the non-native substrate proteins and provides a physical environment optimized to promote and accelerate protein folding. GroES binds to the apical surface of the GroEL ring, thereby capping the opening of the GroEL channel. In Petrotoga mobilis (strain DSM 10674 / SJ95), this protein is Co-chaperonin GroES.